A 95-amino-acid polypeptide reads, in one-letter code: UPF0213 protein YPA_2977 (95 aa).

One can recognise a GIY-YIG domain in the interval 4-79 (SLWHLYLLRT…KQLSKQQKEK (76 aa)).

Belongs to the UPF0213 family.

This Yersinia pestis bv. Antiqua (strain Antiqua) protein is UPF0213 protein YPA_2977.